The chain runs to 248 residues: Biosynthetic peptidoglycan transglycosylase (248 aa).

The chain crosses the membrane as a helical span at residues L17 to V37.

This sequence belongs to the glycosyltransferase 51 family.

Its subcellular location is the cell inner membrane. It carries out the reaction [GlcNAc-(1-&gt;4)-Mur2Ac(oyl-L-Ala-gamma-D-Glu-L-Lys-D-Ala-D-Ala)](n)-di-trans,octa-cis-undecaprenyl diphosphate + beta-D-GlcNAc-(1-&gt;4)-Mur2Ac(oyl-L-Ala-gamma-D-Glu-L-Lys-D-Ala-D-Ala)-di-trans,octa-cis-undecaprenyl diphosphate = [GlcNAc-(1-&gt;4)-Mur2Ac(oyl-L-Ala-gamma-D-Glu-L-Lys-D-Ala-D-Ala)](n+1)-di-trans,octa-cis-undecaprenyl diphosphate + di-trans,octa-cis-undecaprenyl diphosphate + H(+). It participates in cell wall biogenesis; peptidoglycan biosynthesis. Peptidoglycan polymerase that catalyzes glycan chain elongation from lipid-linked precursors. The polypeptide is Biosynthetic peptidoglycan transglycosylase (Bacteroides thetaiotaomicron (strain ATCC 29148 / DSM 2079 / JCM 5827 / CCUG 10774 / NCTC 10582 / VPI-5482 / E50)).